The sequence spans 129 residues: Sulfurtransferase TusD (129 aa).

Cysteine 79 acts as the Cysteine persulfide intermediate in catalysis.

It belongs to the DsrE/TusD family. As to quaternary structure, heterohexamer, formed by a dimer of trimers. The hexameric TusBCD complex contains 2 copies each of TusB, TusC and TusD. The TusBCD complex interacts with TusE.

Its subcellular location is the cytoplasm. Functionally, part of a sulfur-relay system required for 2-thiolation of 5-methylaminomethyl-2-thiouridine (mnm(5)s(2)U) at tRNA wobble positions. Accepts sulfur from TusA and transfers it in turn to TusE. This chain is Sulfurtransferase TusD, found in Pectobacterium atrosepticum (strain SCRI 1043 / ATCC BAA-672) (Erwinia carotovora subsp. atroseptica).